The primary structure comprises 232 residues: Putative ABC transporter ATP-binding protein VNG_2317G (232 aa).

The ABC transporter domain maps to 2-231; it reads LSVRNLVHRY…GALPDAGVRP (230 aa). 34-41 serves as a coordination point for ATP; sequence GANGSGKT.

It belongs to the ABC transporter superfamily.

It is found in the cell membrane. Functionally, probably part of an ABC transporter complex. Responsible for energy coupling to the transport system. This chain is Putative ABC transporter ATP-binding protein VNG_2317G, found in Halobacterium salinarum (strain ATCC 700922 / JCM 11081 / NRC-1) (Halobacterium halobium).